Here is a 188-residue protein sequence, read N- to C-terminus: Large ribosomal subunit protein eL18 (188 aa).

A Glycyl lysine isopeptide (Lys-Gly) (interchain with G-Cter in SUMO2) cross-link involves residue lysine 119. Serine 130 is modified (phosphoserine). The interval 151 to 188 (HFGKAPGTPHSHTKPYVRSKGRKFERARGRRASRGYKN) is disordered. Residue threonine 158 is modified to Phosphothreonine. Basic residues-rich tracts occupy residues 161-171 (SHTKPYVRSKG) and 178-188 (RGRRASRGYKN). Residue lysine 164 forms a Glycyl lysine isopeptide (Lys-Gly) (interchain with G-Cter in SUMO2) linkage.

The protein belongs to the eukaryotic ribosomal protein eL18 family. In terms of assembly, component of the large ribosomal subunit.

It is found in the cytoplasm. The protein localises to the cytosol. Its subcellular location is the rough endoplasmic reticulum. Its function is as follows. Component of the large ribosomal subunit. The ribosome is a large ribonucleoprotein complex responsible for the synthesis of proteins in the cell. This is Large ribosomal subunit protein eL18 (RPL18) from Homo sapiens (Human).